Here is a 473-residue protein sequence, read N- to C-terminus: Glutamyl-tRNA reductase (473 aa).

Substrate contacts are provided by residues 49–52, serine 109, 114–116, and glutamine 120; these read TCNR and EHQ. The active-site Nucleophile is the cysteine 50. NADP(+) is bound at residue 189 to 194; the sequence is GAGAMA. The disordered stretch occupies residues 422 to 473; that stretch reads VAISAPQPSTDSPARAAYQPTDEAATDAEPRRDDAEPPSAAAAQDAGRESRP.

This sequence belongs to the glutamyl-tRNA reductase family. Homodimer.

It carries out the reaction (S)-4-amino-5-oxopentanoate + tRNA(Glu) + NADP(+) = L-glutamyl-tRNA(Glu) + NADPH + H(+). It functions in the pathway porphyrin-containing compound metabolism; protoporphyrin-IX biosynthesis; 5-aminolevulinate from L-glutamyl-tRNA(Glu): step 1/2. In terms of biological role, catalyzes the NADPH-dependent reduction of glutamyl-tRNA(Glu) to glutamate 1-semialdehyde (GSA). The protein is Glutamyl-tRNA reductase of Acidothermus cellulolyticus (strain ATCC 43068 / DSM 8971 / 11B).